A 498-amino-acid polypeptide reads, in one-letter code: NADP-dependent glyceraldehyde-3-phosphate dehydrogenase (498 aa).

Residues Arg-118 and 171–172 (NY) contribute to the substrate site. Positions 194, 197, and 232 each coordinate NADP(+). 247 to 251 (GGDTG) is an NAD(+) binding site. Glu-266 (proton acceptor) is an active-site residue. Residue 299 to 301 (RCT) coordinates substrate. Cys-300 functions as the Nucleophile in the catalytic mechanism. An NADP(+)-binding site is contributed by Glu-393. Arg-453 is a substrate binding site.

This sequence belongs to the aldehyde dehydrogenase family.

The protein resides in the cytoplasm. It catalyses the reaction D-glyceraldehyde 3-phosphate + NADP(+) + H2O = (2R)-3-phosphoglycerate + NADPH + 2 H(+). In terms of biological role, important as a means of generating NADPH for biosynthetic reactions. This Zea mays (Maize) protein is NADP-dependent glyceraldehyde-3-phosphate dehydrogenase (GPN1).